A 402-amino-acid chain; its full sequence is MLSFGLCAVCGQVTTGKNFGVISCRSCAAFFRRAPTWSRRFPECVKASCAIFENGKFKCKKCRLKRCQEVGMDVKKIQQNRDLISTSNMFQKRVTLIFGPAHSMSTFLGRPSFLLHCEPELASHSKTIIDVSYLVDVARKIFEKDATISHKSSNYYNSLELLTLALDAFRPKDIDKKLTRLTKIGKNESLLMWEQSFLRAAEWFSNLPSFMKLEDWMKLDILKSSWLAWTRLEKRCEAADYQKSKILENGVFMCGNGSCLAIAEYEVDLSWCTNYTAEQLKYYLSPDSEGQKCIEDLIELSPSSTEVNFMILQLTLHHAGKKSQGRLLEATENIIEAQANHLHSYYVEKVKMPNYSARLAKMMKINRGIAGEMRCRREKNQIARVFDIMKVEFSDPEMFELT.

Positions 4–79 form a DNA-binding region, nuclear receptor; sequence FGLCAVCGQV…VGMDVKKIQQ (76 aa). 2 consecutive NR C4-type zinc fingers follow at residues 7–27 and 44–67; these read CAVC…CRSC and CVKA…LKRC. Residues 154–402 form the NR LBD domain; it reads NYYNSLELLT…FSDPEMFELT (249 aa).

It belongs to the nuclear hormone receptor family.

The protein resides in the nucleus. Functionally, orphan nuclear receptor. This is Nuclear hormone receptor family member nhr-96 (nhr-96) from Caenorhabditis elegans.